A 901-amino-acid polypeptide reads, in one-letter code: Protein translocase subunit SecA (901 aa).

Residues Gln85, 103-107, and Asp510 contribute to the ATP site; that span reads GEGKT. The span at 836–845 shows a compositional bias: basic and acidic residues; the sequence is EEAERARQEM. Positions 836-901 are disordered; it reads EEAERARQEM…HCHGSRVARQ (66 aa). The segment covering 849 to 866 has biased composition (polar residues); sequence INQNNLPVDENSQTTQNS. The Zn(2+) site is built by Cys882, Cys884, Cys893, and His894. The segment covering 888-901 has biased composition (basic residues); it reads KKYKHCHGSRVARQ.

Belongs to the SecA family. In terms of assembly, monomer and homodimer. Part of the essential Sec protein translocation apparatus which comprises SecA, SecYEG and auxiliary proteins SecDF-YajC and YidC. The cofactor is Zn(2+).

It is found in the cell inner membrane. The protein resides in the cytoplasm. The catalysed reaction is ATP + H2O + cellular proteinSide 1 = ADP + phosphate + cellular proteinSide 2.. Its function is as follows. Part of the Sec protein translocase complex. Interacts with the SecYEG preprotein conducting channel. Has a central role in coupling the hydrolysis of ATP to the transfer of proteins into and across the cell membrane, serving both as a receptor for the preprotein-SecB complex and as an ATP-driven molecular motor driving the stepwise translocation of polypeptide chains across the membrane. The polypeptide is Protein translocase subunit SecA (Haemophilus influenzae (strain PittEE)).